A 465-amino-acid chain; its full sequence is Adenosylhomocysteinase (465 aa).

The substrate site is built by threonine 56, aspartate 131, and glutamate 191. An NAD(+)-binding site is contributed by 192–194 (TTT). Residues lysine 221 and aspartate 225 each coordinate substrate. NAD(+)-binding positions include asparagine 226, 255 to 260 (GYGDVG), glutamate 278, asparagine 313, 334 to 336 (IGH), and asparagine 379.

This sequence belongs to the adenosylhomocysteinase family. NAD(+) serves as cofactor.

It localises to the cytoplasm. It catalyses the reaction S-adenosyl-L-homocysteine + H2O = L-homocysteine + adenosine. Its pathway is amino-acid biosynthesis; L-homocysteine biosynthesis; L-homocysteine from S-adenosyl-L-homocysteine: step 1/1. In terms of biological role, may play a key role in the regulation of the intracellular concentration of adenosylhomocysteine. The polypeptide is Adenosylhomocysteinase (Chelativorans sp. (strain BNC1)).